Consider the following 89-residue polypeptide: Small ribosomal subunit protein uS14A (89 aa).

This sequence belongs to the universal ribosomal protein uS14 family. In terms of assembly, part of the 30S ribosomal subunit. Contacts proteins S3 and S10.

Its function is as follows. Binds 16S rRNA, required for the assembly of 30S particles and may also be responsible for determining the conformation of the 16S rRNA at the A site. The sequence is that of Small ribosomal subunit protein uS14A from Lactococcus lactis subsp. lactis (strain IL1403) (Streptococcus lactis).